The primary structure comprises 276 residues: Phosphatidylglycerol--prolipoprotein diacylglyceryl transferase (276 aa).

Transmembrane regions (helical) follow at residues 17-37 (LAIR…LWFG), 59-79 (MLFF…VLFY), 95-115 (WEGG…MWLF), 129-149 (FIAP…FING), 176-196 (SQLY…WLFA), 202-222 (MGAV…AAEF), and 237-257 (LSMG…MVVW). Arginine 142 contributes to the a 1,2-diacyl-sn-glycero-3-phospho-(1'-sn-glycerol) binding site.

The protein belongs to the Lgt family.

The protein resides in the cell inner membrane. It carries out the reaction L-cysteinyl-[prolipoprotein] + a 1,2-diacyl-sn-glycero-3-phospho-(1'-sn-glycerol) = an S-1,2-diacyl-sn-glyceryl-L-cysteinyl-[prolipoprotein] + sn-glycerol 1-phosphate + H(+). It functions in the pathway protein modification; lipoprotein biosynthesis (diacylglyceryl transfer). In terms of biological role, catalyzes the transfer of the diacylglyceryl group from phosphatidylglycerol to the sulfhydryl group of the N-terminal cysteine of a prolipoprotein, the first step in the formation of mature lipoproteins. In Cupriavidus pinatubonensis (strain JMP 134 / LMG 1197) (Cupriavidus necator (strain JMP 134)), this protein is Phosphatidylglycerol--prolipoprotein diacylglyceryl transferase.